A 579-amino-acid polypeptide reads, in one-letter code: Adenine deaminase (579 aa).

Belongs to the metallo-dependent hydrolases superfamily. Adenine deaminase family. The cofactor is Mn(2+).

It carries out the reaction adenine + H2O + H(+) = hypoxanthine + NH4(+). The sequence is that of Adenine deaminase from Listeria innocua serovar 6a (strain ATCC BAA-680 / CLIP 11262).